A 438-amino-acid polypeptide reads, in one-letter code: Histidinol dehydrogenase (438 aa).

NAD(+) is bound by residues Y138, Q199, and N222. 3 residues coordinate substrate: S245, Q267, and H270. Zn(2+) contacts are provided by Q267 and H270. Catalysis depends on proton acceptor residues E335 and H336. Substrate contacts are provided by H336, D369, E423, and H428. D369 contacts Zn(2+). H428 is a binding site for Zn(2+).

This sequence belongs to the histidinol dehydrogenase family. It depends on Zn(2+) as a cofactor.

It catalyses the reaction L-histidinol + 2 NAD(+) + H2O = L-histidine + 2 NADH + 3 H(+). The protein operates within amino-acid biosynthesis; L-histidine biosynthesis; L-histidine from 5-phospho-alpha-D-ribose 1-diphosphate: step 9/9. Its function is as follows. Catalyzes the sequential NAD-dependent oxidations of L-histidinol to L-histidinaldehyde and then to L-histidine. This is Histidinol dehydrogenase from Burkholderia lata (strain ATCC 17760 / DSM 23089 / LMG 22485 / NCIMB 9086 / R18194 / 383).